The sequence spans 215 residues: MGKVYDWFEERLEIQAIADDITSKYVPPHVNIFYCLGGITLTCFLVQVATGFAMTFYYRPTVTEAFASVQYIMTEVNFGWLIRSVHRWSASMMVLMMILHVFRVYLTGGFKKPRELTWVTGVILAVLTVSFGVTGYSSPWDQIGYWAVKIVTGVPEAIPVVGSPLVELSRGSVSVGQSTLTRFYSLHTFVSPLLTAVFMLMHFLMIRKQGISGPL.

A helical transmembrane segment spans residues 32-52 (IFYCLGGITLTCFLVQVATGF). Residue Cys-35 participates in heme c binding. Heme b-binding residues include His-86 and His-100. 3 helical membrane-spanning segments follow: residues 90 to 110 (ASMM…TGGF), 116 to 136 (LTWV…VTGY), and 186 to 206 (LHTF…FLMI). Positions 187 and 202 each coordinate heme b.

It belongs to the cytochrome b family. PetB subfamily. The 4 large subunits of the cytochrome b6-f complex are cytochrome b6, subunit IV (17 kDa polypeptide, PetD), cytochrome f and the Rieske protein, while the 4 small subunits are PetG, PetL, PetM and PetN. The complex functions as a dimer. Heme b serves as cofactor. Requires heme c as cofactor.

Its subcellular location is the plastid. The protein localises to the chloroplast thylakoid membrane. In terms of biological role, component of the cytochrome b6-f complex, which mediates electron transfer between photosystem II (PSII) and photosystem I (PSI), cyclic electron flow around PSI, and state transitions. The protein is Cytochrome b6 of Huperzia lucidula (Shining clubmoss).